The chain runs to 181 residues: ATP-dependent protease subunit HslV (181 aa).

Residue Thr-5 is part of the active site. Residues Ser-162, Cys-165, and Thr-168 each contribute to the Na(+) site.

Belongs to the peptidase T1B family. HslV subfamily. In terms of assembly, a double ring-shaped homohexamer of HslV is capped on each side by a ring-shaped HslU homohexamer. The assembly of the HslU/HslV complex is dependent on binding of ATP.

The protein resides in the cytoplasm. It catalyses the reaction ATP-dependent cleavage of peptide bonds with broad specificity.. Allosterically activated by HslU binding. Its function is as follows. Protease subunit of a proteasome-like degradation complex believed to be a general protein degrading machinery. The polypeptide is ATP-dependent protease subunit HslV (Campylobacter hominis (strain ATCC BAA-381 / DSM 21671 / CCUG 45161 / LMG 19568 / NCTC 13146 / CH001A)).